The sequence spans 329 residues: Ephrin-B1 (329 aa).

Residues 1 to 20 form the signal peptide; the sequence is MEGLRRLLGLLLVLYRLCSA. Topologically, residues 21–226 are extracellular; sequence LGKNLEPVTW…FFNSKIAVFA (206 aa). Residues 23-157 form the Ephrin RBD domain; that stretch reads KNLEPVTWNS…TRSMKIIMKV (135 aa). 2 cysteine pairs are disulfide-bonded: Cys57–Cys94 and Cys82–Cys146. Asn132 carries an N-linked (GlcNAc...) asparagine glycan. A disordered region spans residues 163–192; sequence AVPPEQLTTTRPSKEADNTGKIATFGPWNG. Asn203 carries N-linked (GlcNAc...) asparagine glycosylation. Residues 227–247 form a helical membrane-spanning segment; that stretch reads AIGAGCVIFILIIIFLVVLLI. At 248 to 329 the chain is on the cytoplasmic side; the sequence is KIRKRHRKHT…QSPANIYYKV (82 aa). The PDZ-binding motif lies at 327–329; it reads YKV.

This sequence belongs to the ephrin family. In terms of assembly, interacts with TLE4 through the PDZ-binding motif. In terms of processing, inducible phosphorylation of tyrosine residues in the cytoplasmic domain. Tyrosine phosphorylation inhibits TLE4-binding. As to expression, expressed at low levels in most tissues with highest levels in the kidney, oocytes, ovary and testis.

Its subcellular location is the membrane. Its function is as follows. Cell surface transmembrane ligand for Eph receptors, a family of receptor tyrosine kinases which are crucial for migration, repulsion and adhesion during neuronal, vascular and epithelial development. Binds promiscuously Eph receptors residing on adjacent cells, leading to contact-dependent bidirectional signaling into neighboring cells. The signaling pathway downstream of the receptor is referred to as forward signaling while the signaling pathway downstream of the ephrin ligand is referred to as reverse signaling. May have a role in the developing mesenchymal and nervous tissue. This chain is Ephrin-B1 (efnb1), found in Xenopus laevis (African clawed frog).